Here is a 338-residue protein sequence, read N- to C-terminus: Terpene synthase 1 (338 aa).

The DDxx(x)D/E motif signature appears at aspartate 80 to serine 85. The NDxxSxxxD/E motif signature appears at asparagine 220–glutamate 228.

Belongs to the terpene synthase family.

It catalyses the reaction (2E,6E)-farnesyl diphosphate = (2S,3R,6S,9S)-(-)-protoillud-7-ene + diphosphate. In terms of biological role, terpene synthase that converts its substrate farnesyl diphosphate (FPP) into the sesquiterpene protoillud-7-ene. The chain is Terpene synthase 1 from Cavenderia fasciculata (Slime mold).